The following is a 396-amino-acid chain: Phosphoglycerate kinase (396 aa).

Substrate-binding positions include 21–23 (DLN), Arg-36, 59–62 (HFGR), Arg-118, and Arg-151. Residues Lys-201, Glu-323, and 353-356 (GGDT) each bind ATP.

Belongs to the phosphoglycerate kinase family. In terms of assembly, monomer.

Its subcellular location is the cytoplasm. It carries out the reaction (2R)-3-phosphoglycerate + ATP = (2R)-3-phospho-glyceroyl phosphate + ADP. It functions in the pathway carbohydrate degradation; glycolysis; pyruvate from D-glyceraldehyde 3-phosphate: step 2/5. The polypeptide is Phosphoglycerate kinase (Brucella abortus biovar 1 (strain 9-941)).